The following is a 152-amino-acid chain: Protein NrdI (152 aa).

It belongs to the NrdI family.

Functionally, probably involved in ribonucleotide reductase function. This chain is Protein NrdI, found in Mycobacterium sp. (strain JLS).